The chain runs to 351 residues: UDP-N-acetylenolpyruvoylglucosamine reductase (351 aa).

Positions 25-196 constitute an FAD-binding PCMH-type domain; it reads HIQAQARWLL…AAVEFRLPLL (172 aa). Arg173 is a catalytic residue. The active-site Proton donor is Ser246. The active site involves Glu343.

The protein belongs to the MurB family. Requires FAD as cofactor.

Its subcellular location is the cytoplasm. The catalysed reaction is UDP-N-acetyl-alpha-D-muramate + NADP(+) = UDP-N-acetyl-3-O-(1-carboxyvinyl)-alpha-D-glucosamine + NADPH + H(+). It functions in the pathway cell wall biogenesis; peptidoglycan biosynthesis. Functionally, cell wall formation. This is UDP-N-acetylenolpyruvoylglucosamine reductase from Xylella fastidiosa (strain 9a5c).